We begin with the raw amino-acid sequence, 120 residues long: Ribosome-binding factor A (120 aa).

This sequence belongs to the RbfA family. Monomer. Binds 30S ribosomal subunits, but not 50S ribosomal subunits or 70S ribosomes.

The protein resides in the cytoplasm. One of several proteins that assist in the late maturation steps of the functional core of the 30S ribosomal subunit. Associates with free 30S ribosomal subunits (but not with 30S subunits that are part of 70S ribosomes or polysomes). Required for efficient processing of 16S rRNA. May interact with the 5'-terminal helix region of 16S rRNA. In Rickettsia africae (strain ESF-5), this protein is Ribosome-binding factor A.